The chain runs to 324 residues: Adducin-related protein C1289.14 (324 aa).

This sequence belongs to the aldolase class II family. Adducin subfamily.

The chain is Adducin-related protein C1289.14 from Schizosaccharomyces pombe (strain 972 / ATCC 24843) (Fission yeast).